We begin with the raw amino-acid sequence, 256 residues long: Type III pantothenate kinase (256 aa).

7 to 14 (DIGNTNVV) provides a ligand contact to ATP. A substrate-binding site is contributed by 108 to 111 (GADC). Asp110 (proton acceptor) is an active-site residue. A K(+)-binding site is contributed by Asp130. Thr133 contacts ATP. A substrate-binding site is contributed by Thr185.

Belongs to the type III pantothenate kinase family. As to quaternary structure, homodimer. It depends on NH4(+) as a cofactor. The cofactor is K(+).

It is found in the cytoplasm. It catalyses the reaction (R)-pantothenate + ATP = (R)-4'-phosphopantothenate + ADP + H(+). The protein operates within cofactor biosynthesis; coenzyme A biosynthesis; CoA from (R)-pantothenate: step 1/5. In terms of biological role, catalyzes the phosphorylation of pantothenate (Pan), the first step in CoA biosynthesis. The chain is Type III pantothenate kinase from Bifidobacterium adolescentis (strain ATCC 15703 / DSM 20083 / NCTC 11814 / E194a).